Reading from the N-terminus, the 872-residue chain is DNA mismatch repair protein MutS (872 aa).

602 to 609 (GPNMSGKS) is a binding site for ATP.

Belongs to the DNA mismatch repair MutS family.

Functionally, this protein is involved in the repair of mismatches in DNA. It is possible that it carries out the mismatch recognition step. This protein has a weak ATPase activity. The polypeptide is DNA mismatch repair protein MutS (Staphylococcus aureus (strain Mu3 / ATCC 700698)).